A 502-amino-acid polypeptide reads, in one-letter code: MTIKAEEISALLKERIASYGSEIEVSETGTVIQVGDGIARAHGLDNVMAGELVEFSNGVMGLAQNLEEGNVGIIILGDYKGIKEGDSVKRTGRIMEVPVGEALLGRVVNPLGQPIDGLGPIVTDTYNPIERKAYGVMARKSVHEPLQTGIKAIDALVPIGRGQRELIIGDRQTGKTSVAIDTIINQKEENMICIYVAIGQKESTVRGVVETLRQNGALDYTIVVSASASQPAPLLYLAPFAGVSMGEYFMDRGQHVLVVYDDLSKQAAAYRELSLLLRRPPGREAYPGDVFYLHSRLLERAAKLNDELGGGSLTALPFIETQASDISAYIPTNVISITDGQIFLQSDLFFSGVRPAINAGLSVSRVGGSAQVKAMKKVAGTLRLDLASYRELEAFAQFGSDLDKATQSKLNRGQRTVEVLKQDLNAPLSVDKQVIIIYALTKGHLDDIPVTDIRRFETEMNAWLDQNRKDLCREIRQTGNLPSDEAMVDAITEFKKTFSPSV.

Position 169–176 (169–176 (GDRQTGKT)) interacts with ATP.

Belongs to the ATPase alpha/beta chains family. In terms of assembly, F-type ATPases have 2 components, CF(1) - the catalytic core - and CF(0) - the membrane proton channel. CF(1) has five subunits: alpha(3), beta(3), gamma(1), delta(1), epsilon(1). CF(0) has three main subunits: a(1), b(2) and c(9-12). The alpha and beta chains form an alternating ring which encloses part of the gamma chain. CF(1) is attached to CF(0) by a central stalk formed by the gamma and epsilon chains, while a peripheral stalk is formed by the delta and b chains.

It localises to the cell membrane. It catalyses the reaction ATP + H2O + 4 H(+)(in) = ADP + phosphate + 5 H(+)(out). In terms of biological role, produces ATP from ADP in the presence of a proton gradient across the membrane. The alpha chain is a regulatory subunit. This chain is ATP synthase subunit alpha, found in Exiguobacterium sp. (strain ATCC BAA-1283 / AT1b).